Here is a 211-residue protein sequence, read N- to C-terminus: Octanoyltransferase (211 aa).

The region spanning 32–211 (DHEPEIIYLV…IQTEFNKIFK (180 aa)) is the BPL/LPL catalytic domain. Substrate is bound by residues 71 to 78 (RGGKFTFH), 145 to 147 (AIG), and 158 to 160 (GVA). The active-site Acyl-thioester intermediate is Cys-176.

This sequence belongs to the LipB family.

Its subcellular location is the cytoplasm. It catalyses the reaction octanoyl-[ACP] + L-lysyl-[protein] = N(6)-octanoyl-L-lysyl-[protein] + holo-[ACP] + H(+). The protein operates within protein modification; protein lipoylation via endogenous pathway; protein N(6)-(lipoyl)lysine from octanoyl-[acyl-carrier-protein]: step 1/2. Its function is as follows. Catalyzes the transfer of endogenously produced octanoic acid from octanoyl-acyl-carrier-protein onto the lipoyl domains of lipoate-dependent enzymes. Lipoyl-ACP can also act as a substrate although octanoyl-ACP is likely to be the physiological substrate. In Rickettsia massiliae (strain Mtu5), this protein is Octanoyltransferase.